Consider the following 2364-residue polypeptide: Cytotoxin-L (2364 aa).

The four-helical bundle stretch occupies residues 1–91; the sequence is MNLVNKAQLQ…EVLELKNNSL (91 aa). The GT44 domain occupies 96-468; the sequence is KNLHFIWIGG…APDVRSTINL (373 aa). A glucosyltransferase region region spans residues 96–468; sequence KNLHFIWIGG…APDVRSTINL (373 aa). Residues 101–103, N139, 265–270, and 286–288 each bind UDP-alpha-D-glucose; these read IWI, LAAASD, and DVD. Residues D288, E515, and S518 each contribute to the Mg(2+) site. Residue 518 to 520 participates in UDP-alpha-D-glucose binding; that stretch reads SLW. The segment at 544–799 is autoprocessing region; that stretch reads GEDDNLDFAQ…KSKYLHELST (256 aa). Zn(2+)-binding residues include E545 and D546. The Peptidase C80 domain occupies 567–774; that stretch reads LSSMKTRNKE…EESIIKDISS (208 aa). Positions 577, 600, and 647 each coordinate 1D-myo-inositol hexakisphosphate. H653 contributes to the Zn(2+) binding site. The active-site For protease activity is the H653. C698 (nucleophile; for protease activity) is an active-site residue. H757 contacts Zn(2+). Residues K764, K775, and K792 each coordinate 1D-myo-inositol hexakisphosphate. The segment at 800–1500 is translocation region; sequence LLQEIRNNAN…ESIIRNIYMP (701 aa). Interaction with host SEMA6A and SEMA6B stretches follow at residues 1433–1438, 1466–1471, 1484–1495, 1504–1511, and 1596–1601; these read CMKLIE, DNETKY, FTAEFSNESIIR, NLFIYSSK, and YNNLDP. 20 Cell wall-binding repeats span residues 1813–1832, 1833–1852, 1854–1873, 1876–1895, 1926–1945, 1946–1965, 1967–1986, 1987–2006, 2007–2026, 2057–2076, 2077–2097, 2099–2118, 2119–2138, 2139–2158, 2209–2224, 2227–2249, 2250–2269, 2270–2289, 2320–2339, and 2340–2359; these read EFGLVSLDNDYFYINSFGNM, VSGLIYINDSLYYFKPPKNN, ITGFTTIDGNKYYFDPTKSG, SIGEITIDGKDYYFNKQGIL, FIGKLNIDGKIYYFEDNYRA, AVEWKLLDDETYYFNPKTGE, LKGLHQIGDNKYYFDDNGIM, QTGFITINDKVFYFNNDGVM, QVGYIEVNGKYFYFGKNGER, YNGILNFNGKIYFFDISNTA, VVGWGTLDDGSTYYFDDNRAE, CIGLTVINDCKYYFDDNGIR, QLGFITINDNIFYFSESGKI, ELGYQNINGNYFYIDESGLV, ETGWIENETDKYYFDP, KKAYKGINVVDDIKYYFDENGIM, RTGLISFENNNYYFNEDGKM, QFGYLNIKDKMFYFGKDGKM, YTGWLDLDGKRYYFTDEYIA, and ATGSLTIDGYNYYFDPDTAE. Residues 1835–2364 form a receptor-binding (CROPS) region region; sequence GLIYINDSLY…PDTAELVVSE (530 aa).

The protein belongs to the clostridial glucosylating toxin (LCGT) family. Homomultimer; forms an inactive homomultimer at pH 8, which dissociates at pH 4, leading to cytotoxicity. Interacts with host SEMA6A; interaction promotes toxin entry into host cell. Interacts with host SEMA6B; interaction promotes toxin entry into host cell. The cofactor is Zn(2+). Mn(2+) is required as a cofactor. Requires Mg(2+) as cofactor. Post-translationally, undergoes autocatalytic cleavage to release the N-terminal part (Glucosyltransferase TcsL), which constitutes the active part of the toxin, in the host cytosol. 1D-myo-inositol hexakisphosphate-binding (InsP6) activates the peptidase C80 domain and promotes autoprocessing.

The protein localises to the secreted. The protein resides in the host endosome membrane. It localises to the host cytoplasm. It is found in the host cytosol. Its subcellular location is the host cell membrane. The enzyme catalyses L-threonyl-[protein] + UDP-alpha-D-glucose = 3-O-(alpha-D-glucosyl)-L-threonyl-[protein] + UDP + H(+). Protease activity is activated upon binding to 1D-myo-inositol hexakisphosphate (InsP6), which induces conformational reorganization. Functionally, precursor of a cytotoxin that targets the vascular endothelium, inducing an anti-inflammatory effect and resulting in lethal toxic shock syndrome. TcsL constitutes the main toxin that mediates the pathology of P.sordellii infection, an anaerobic Gram-positive bacterium found in soil and in the gastrointestinal and vaginal tracts of animals and humans; although the majority of carriers are asymptomatic, pathogenic P.sordellii infections arise rapidly and are highly lethal. This form constitutes the precursor of the toxin: it enters into host cells and mediates autoprocessing to release the active toxin (Glucosyltransferase TcsL) into the host cytosol. Targets vascular endothelium by binding to the semaphorin proteins SEMA6A and SEMA6B, and enters host cells via clathrin-mediated endocytosis. Once entered into host cells, acidification in the endosome promotes the membrane insertion of the translocation region and formation of a pore, leading to translocation of the GT44 and peptidase C80 domains across the endosomal membrane. This activates the peptidase C80 domain and autocatalytic processing, releasing the N-terminal part (Glucosyltransferase TcsL), which constitutes the active part of the toxin, in the cytosol. Its function is as follows. Active form of the toxin, which is released into the host cytosol following autoprocessing and inactivates small GTPases. Acts by mediating monoglucosylation of small GTPases of the Ras (H-Ras/HRAS, K-Ras/KRAS, N-Ras/NRAS and Ral/RALA) family in host cells at the conserved threonine residue located in the switch I region ('Thr-37/35'), using UDP-alpha-D-glucose as the sugar donor. Also able to catalyze monoglucosylation of some members of the Rho family (Rac1 and Rap2A), but with less efficiency than with Ras proteins. Monoglucosylation of host small GTPases completely prevents the recognition of the downstream effector, blocking the GTPases in their inactive form and leading to apoptosis. Induces an anti-inflammatory effect, mainly by inactivating Ras proteins which results in blockage of the cell cycle and killing of immune cells. The absence or moderate local inflammatory response allows C.sordellii spreading in deep tissues, production of toxin which is released in the general circulation and causes a toxic shock syndrome. In Paraclostridium sordellii (Clostridium sordellii), this protein is Cytotoxin-L.